We begin with the raw amino-acid sequence, 342 residues long: Peptide chain release factor 1 (342 aa).

Position 211 is an N5-methylglutamine (glutamine 211). The interval 262–282 (KEREISQKRKSQIGTGERSEK) is disordered.

It belongs to the prokaryotic/mitochondrial release factor family. Methylated by PrmC. Methylation increases the termination efficiency of RF1.

The protein localises to the cytoplasm. Functionally, peptide chain release factor 1 directs the termination of translation in response to the peptide chain termination codons UAG and UAA. The polypeptide is Peptide chain release factor 1 (prfA) (Thermotoga maritima (strain ATCC 43589 / DSM 3109 / JCM 10099 / NBRC 100826 / MSB8)).